Here is a 293-residue protein sequence, read N- to C-terminus: Insulin-like growth factor-binding protein 3 (293 aa).

The signal sequence occupies residues 1–27; the sequence is MQRARPALWAAALIALALLRGPPAARA. The IGFBP N-terminal domain occupies 36–119; the sequence is PVVRCEPCDA…LDGRGICANA (84 aa). Intrachain disulfides connect Cys40–Cys69, Cys43–Cys71, Cys51–Cys72, Cys60–Cys75, Cys83–Cys96, and Cys90–Cys116. 2 N-linked (GlcNAc...) asparagine glycosylation sites follow: Asn118 and Asn138. 2 disordered regions span residues 132-166 and 178-213; these read APPA…PDSK and KKGH…TEYG. At Ser150 the chain carries Phosphoserine. Residues 178–192 show a composition bias toward basic and acidic residues; that stretch reads KKGHAKDSQRYKVDY. The span at 193–204 shows a compositional bias: polar residues; the sequence is ESQSTDTQNFSS. N-linked (GlcNAc...) asparagine glycosylation occurs at Asn201. The residue at position 203 (Ser203) is a Phosphoserine. The 76-residue stretch at 212–287 folds into the Thyroglobulin type-1 domain; sequence YGPCRREMED…DVKGKGDVHC (76 aa). 3 disulfide bridges follow: Cys215–Cys242, Cys253–Cys264, and Cys266–Cys287.

In terms of assembly, interacts with XLKD1. Binds IGF2 more than IGF1. Forms a ternary complex of about 140 to 150 kDa with IGF1 or IGF2 and a 85 kDa glycoprotein (ALS). Interacts with humanin; humanin competes with importin KPNB1 for binding to IGFBP3, blocking IGFBP3 nuclear import and IGFBP3-mediated apoptosis. Interacts with TMEM219. Interacts with RXRA; this interaction modulates the transcriptional activity of RXRA. Interacts with LRP1; this interaction mediates cell growth inhibition independent of IGF1. Post-translationally, phosphorylated by FAM20C in the extracellular medium. Phosphorylated by CK2; resulting in decreased nuclear localization.

It localises to the secreted. It is found in the nucleus. Its function is as follows. Multifunctional protein that plays a critical role in regulating the availability of IGFs such as IGF1 and IGF2 to their receptors and thereby regulates IGF-mediated cellular processes including proliferation, differentiation, and apoptosis in a cell-type specific manner. Also exhibits IGF-independent antiproliferative and apoptotic effects mediated by its receptor TMEM219/IGFBP-3R. Inhibits the positive effect of humanin on insulin sensitivity. Promotes testicular germ cell apoptosis. Acts via LRP-1/alpha2M receptor, also known as TGF-beta type V receptor, to mediate cell growth inhibition independent of IGF1. Mechanistically, induces serine-specific dephosphorylation of IRS1 or IRS2 upon ligation to its receptor, leading to the inhibitory cascade. In the nucleus, interacts with transcription factors such as retinoid X receptor-alpha/RXRA to regulate transcriptional signaling and apoptosis. This Sus scrofa (Pig) protein is Insulin-like growth factor-binding protein 3 (IGFBP3).